Reading from the N-terminus, the 407-residue chain is Peptidase T (407 aa).

Histidine 78 is a Zn(2+) binding site. Residue aspartate 80 is part of the active site. Aspartate 139 is a binding site for Zn(2+). The active-site Proton acceptor is glutamate 173. Glutamate 174, aspartate 196, and histidine 378 together coordinate Zn(2+).

It belongs to the peptidase M20B family. Zn(2+) is required as a cofactor.

The protein localises to the cytoplasm. It carries out the reaction Release of the N-terminal residue from a tripeptide.. Cleaves the N-terminal amino acid of tripeptides. In Shewanella halifaxensis (strain HAW-EB4), this protein is Peptidase T.